Reading from the N-terminus, the 375-residue chain is ATP-sensitive inward rectifier potassium channel 15 (375 aa).

At 1–60 (MDAIHIGMSSTPLVKHTAGAGLKANRPRVMSKSGHSNVRIDKVDGIYLLYLQDLWTTVID) the chain is on the cytoplasmic side. The chain crosses the membrane as a helical span at residues 61 to 87 (MKWRYKLTLFAATFVMTWFLFGVIYYA). Residues 88–113 (IAFIHGDLEPGEPISNHTPCIMKVDS) lie on the Extracellular side of the membrane. An intramembrane region (helical; Pore-forming) is located at residues 114–130 (LTGAFLFSLESQTTIGY). The Selectivity filter motif lies at 127–132 (TIGYGV). Over 131–139 (GVRSITEEC) the chain is Extracellular. A helical transmembrane segment spans residues 140-165 (PHAIFLLVAQLVITTLIEIFITGTFL). Topologically, residues 166-375 (AKIARPKKRA…RTLLLQQSNV (210 aa)) are cytoplasmic.

The protein belongs to the inward rectifier-type potassium channel (TC 1.A.2.1) family. KCNJ15 subfamily. As to quaternary structure, can form heteromultimeric channels with Kir5.1/KCNJ16. Interacts with PATJ.

The protein resides in the membrane. The protein localises to the cell membrane. The enzyme catalyses K(+)(in) = K(+)(out). With respect to regulation, channel activity is regulated by variations of cytosolic pH; reversibly inhibited by acidic pH values. Inhibited by Ba(2+) and Cs(+) in a voltage-dependent manner. Its function is as follows. Inward rectifier potassium channels are characterized by a greater tendency to allow potassium to flow into the cell rather than out of it. Their voltage dependence is regulated by the concentration of extracellular potassium; as external potassium is raised, the voltage range of the channel opening shifts to more positive voltages. The inward rectification is mainly due to the blockage of outward current by internal magnesium. This chain is ATP-sensitive inward rectifier potassium channel 15 (KCNJ15), found in Homo sapiens (Human).